An 881-amino-acid polypeptide reads, in one-letter code: Phosphoenolpyruvate carboxylase (881 aa).

Catalysis depends on residues H142 and K547.

This sequence belongs to the PEPCase type 1 family. Requires Mg(2+) as cofactor.

It carries out the reaction oxaloacetate + phosphate = phosphoenolpyruvate + hydrogencarbonate. Its function is as follows. Forms oxaloacetate, a four-carbon dicarboxylic acid source for the tricarboxylic acid cycle. This Hahella chejuensis (strain KCTC 2396) protein is Phosphoenolpyruvate carboxylase.